Consider the following 453-residue polypeptide: tRNA-2-methylthio-N(6)-dimethylallyladenosine synthase (453 aa).

One can recognise an MTTase N-terminal domain in the interval 7–123 (GTYWITTFGC…LDTLLSQVEA (117 aa)). Residues Cys16, Cys52, Cys86, Cys158, Cys162, and Cys165 each contribute to the [4Fe-4S] cluster site. Positions 144-381 (RDSSLCAWVN…NALVERKAKA (238 aa)) constitute a Radical SAM core domain. The TRAM domain maps to 384-447 (QRYLGRVEEV…AFSLSGSAQA (64 aa)).

Belongs to the methylthiotransferase family. MiaB subfamily. Monomer. The cofactor is [4Fe-4S] cluster.

The protein localises to the cytoplasm. It catalyses the reaction N(6)-dimethylallyladenosine(37) in tRNA + (sulfur carrier)-SH + AH2 + 2 S-adenosyl-L-methionine = 2-methylsulfanyl-N(6)-dimethylallyladenosine(37) in tRNA + (sulfur carrier)-H + 5'-deoxyadenosine + L-methionine + A + S-adenosyl-L-homocysteine + 2 H(+). Its function is as follows. Catalyzes the methylthiolation of N6-(dimethylallyl)adenosine (i(6)A), leading to the formation of 2-methylthio-N6-(dimethylallyl)adenosine (ms(2)i(6)A) at position 37 in tRNAs that read codons beginning with uridine. This Synechococcus sp. (strain RCC307) protein is tRNA-2-methylthio-N(6)-dimethylallyladenosine synthase.